A 227-amino-acid chain; its full sequence is MSHTHFDLTALPQSARYKLLTATVVPRPIAWVGTRGSGETGKLGFNLAPYSFFGLMGSEPPVVAFAPGDRADGTPKDSALNIGSGGEFTVSLVSAALAAVMNLSATDFPRGMDEAQALGIQLAPGRRVQVPHVAAAPAALECREVQTVSIGRTRIILGEVLGLWLREDAVLDAEKHHVDTAALDLVGRMGGRGTYTHTRDTFELGRLTYAQWQEQWQAREEGDHSEK.

This sequence belongs to the flavoredoxin family. It depends on FMN as a cofactor.

This is an uncharacterized protein from Deinococcus radiodurans (strain ATCC 13939 / DSM 20539 / JCM 16871 / CCUG 27074 / LMG 4051 / NBRC 15346 / NCIMB 9279 / VKM B-1422 / R1).